Reading from the N-terminus, the 314-residue chain is ATP synthase gamma chain (314 aa).

Belongs to the ATPase gamma chain family. As to quaternary structure, F-type ATPases have 2 components, CF(1) - the catalytic core - and CF(0) - the membrane proton channel. CF(1) has five subunits: alpha(3), beta(3), gamma(1), delta(1), epsilon(1). CF(0) has three main subunits: a, b and c.

The protein localises to the cell inner membrane. In terms of biological role, produces ATP from ADP in the presence of a proton gradient across the membrane. The gamma chain is believed to be important in regulating ATPase activity and the flow of protons through the CF(0) complex. The sequence is that of ATP synthase gamma chain from Gloeobacter violaceus (strain ATCC 29082 / PCC 7421).